Consider the following 146-residue polypeptide: MSTILVLHGPNLNMLGTREPEVYGHETLADIDDRLRSKAAEKGHHLLHLQSNAEYELIERVHEARAEGVDFIIINPAAFTHTSVALRDAMLASGIPFIEVHLSNVHAREPFRHHSYFSDIAEGVICGLGSQGYDLALKAALQRIHR.

The active-site Proton acceptor is the tyrosine 23. Substrate contacts are provided by asparagine 75, histidine 81, and aspartate 88. Histidine 101 acts as the Proton donor in catalysis. Residues 102–103 (LS) and arginine 112 each bind substrate.

Belongs to the type-II 3-dehydroquinase family. Homododecamer.

It catalyses the reaction 3-dehydroquinate = 3-dehydroshikimate + H2O. Its pathway is metabolic intermediate biosynthesis; chorismate biosynthesis; chorismate from D-erythrose 4-phosphate and phosphoenolpyruvate: step 3/7. Functionally, catalyzes a trans-dehydration via an enolate intermediate. This is 3-dehydroquinate dehydratase from Marinobacter nauticus (strain ATCC 700491 / DSM 11845 / VT8) (Marinobacter aquaeolei).